The sequence spans 660 residues: MRLGVCFSLAAAASVARAALTATENDTSIVLENDRLRATFDKGRGSIIDLYLDGQDFLGPQSGSTGIGPYLDCYCTPSGFYTAGSTNPVTELVQGTDSTGTKYAGIILNDTYTPTGQEFQQYWFLRDGETGFHMFSRLAYYNETTPFLRNLQELRTLFRPNTDLWTHLTSSDLQTAPLPSDEAIAEQIVVQDATWRLNNTPDDAYYQQFSEYFTKYTFSNHWRDNDVHGLYADGSTSDGTTYGAWLVMNTKDTYYGGPLHSDLTVDGIIYNYIVSNHHGEGTPNITNGFDRTFGPQFYLFNGGGSSSLEELRDEARSLASPSWNADFYDSIAKHVIGYVPSSQRGSVKGTIKLPKNAKSPIAVLTVDGHYFQDNSAVPSSHQYWADIDKNGRFSIDRVVAGKYRLTVYADGIFGDFTRDGIVVKARKSTSIKETWKPESAGTEIWRLGTPDKSSGEFRHGAARDPTHPRHPPEYLIYWGAYDWQSDFPGGIDYMIGESDPATDFNTVHWAVFGPTPDNPVAESNTTHDWRIRFDLSAKQLHARKTATLTIQLAGAKAASGNTDVYNASEPYANLPLRSYINEQEEPLTMVIGYDQSSSCIVRSAVSCYQVREKWEFPASWLKEGSNLLRLSLPTNGTNYESAVLPTSVYVQYDALRLELK.

The N-terminal stretch at 1–18 (MRLGVCFSLAAAASVARA) is a signal peptide. Residues N25, N109, N142, and N284 are each glycosylated (N-linked (GlcNAc...) asparagine). Residues 446–466 (RLGTPDKSSGEFRHGAARDPT) form a disordered region. Basic and acidic residues predominate over residues 453-466 (SSGEFRHGAARDPT). N-linked (GlcNAc...) asparagine glycosylation is found at N524, N566, and N635.

It belongs to the polysaccharide lyase 4 family.

The protein resides in the secreted. It carries out the reaction Endotype eliminative cleavage of L-alpha-rhamnopyranosyl-(1-&gt;4)-alpha-D-galactopyranosyluronic acid bonds of rhamnogalacturonan I domains in ramified hairy regions of pectin leaving L-rhamnopyranose at the reducing end and 4-deoxy-4,5-unsaturated D-galactopyranosyluronic acid at the non-reducing end.. Pectinolytic enzymes consist of four classes of enzymes: pectin lyase, polygalacturonase, pectin methylesterase and rhamnogalacturonase. Degrades the rhamnogalacturonan I (RG-I) backbone of pectin. Active against linseed rhamnogalacturonan. The chain is Rhamnogalacturonate lyase B (rglB) from Emericella nidulans (strain FGSC A4 / ATCC 38163 / CBS 112.46 / NRRL 194 / M139) (Aspergillus nidulans).